The primary structure comprises 125 residues: Aspercryptin biosynthesis cluster protein K (125 aa).

The segment at 104–125 (QRAESVAGDSRPREHRQGAVGY) is disordered. Over residues 113–125 (SRPREHRQGAVGY) the composition is skewed to basic and acidic residues.

It participates in secondary metabolite biosynthesis. In terms of biological role, part of the gene cluster that mediates the biosynthesis of aspercryptins, linear lipopeptides built from six amino acids including 2 highly unusual and nonproteogenic amino acids, 2-amino-octanoic acid (2aoa) and 2-amino-dodecanol (2adol). The core structure of aspercryptins is as follows: Ser/Ala-Thr-Ile/Val-2aoa-Asn-2adol. The first step of aspercryptin biosynthesis is the generation of the fatty acid precursors, octanoic and dodecanoic acids, by the FAS subunits atnF and atnM. The fatty acid precursors are likely transformed into the corresponding alpha-amino fatty acids in three steps. First, they are hydroxylated by the cytochrome P450 monooxygenase atnE, then oxidized to the corresponding alpha-keto acids by the NAD(P)-dependent oxidoreductase atnD, and finally converted to the alpha-amino fatty acids by the PLP-dependent aminotransferases atnH or atnJ. the alpha-amino fatty acids, 2-amino-octanoic and 2-amino-dodecanoic acids, are recognized, activated, and covalently tethered to the NRPS atnA by its fourth and sixth adenylation domains. The second module of atnA is the Thr module and contains an epimerase (E) domain responsible for the epimerization of Thr to D-allo-Thr. Additionally, despite atnA having only one epimerase domain, the first amino acid of aspercryptin A1 is D-Ser, suggesting that serine is either loaded directly as D-Ser on the first module or that the epimerase domain in the threonine module epimerizes both L-Ser and L-Thr. After condensation of the hexapeptide of aspercryptin, the C-terminal reductase (TE) domain might be involved in the reductive release and production of the aldehyde hexapeptide. Further reduction would generate aspercryptins. The variety of aspercryptins produced reflects the flexibility of the atnA NRPS, allowing incorporation of alanine instead of serine, valine for isoleucine, and a C10 fatty amino alcohol instead of the C12 version. AtnB seems to be involved in the selectivity for Ile versus Val by the third module. Moreover, type B, C and D aspercryptins have an additional N-terminal cichorine, acetyl and propionyl group respectively. In Emericella nidulans (strain FGSC A4 / ATCC 38163 / CBS 112.46 / NRRL 194 / M139) (Aspergillus nidulans), this protein is Aspercryptin biosynthesis cluster protein K.